A 500-amino-acid chain; its full sequence is Probable cytosol aminopeptidase (500 aa).

The Mn(2+) site is built by Lys-274 and Asp-279. Residue Lys-286 is part of the active site. Mn(2+) is bound by residues Asp-297, Asp-356, and Glu-358. The active site involves Arg-360.

This sequence belongs to the peptidase M17 family. Mn(2+) serves as cofactor.

Its subcellular location is the cytoplasm. It carries out the reaction Release of an N-terminal amino acid, Xaa-|-Yaa-, in which Xaa is preferably Leu, but may be other amino acids including Pro although not Arg or Lys, and Yaa may be Pro. Amino acid amides and methyl esters are also readily hydrolyzed, but rates on arylamides are exceedingly low.. It catalyses the reaction Release of an N-terminal amino acid, preferentially leucine, but not glutamic or aspartic acids.. Presumably involved in the processing and regular turnover of intracellular proteins. Catalyzes the removal of unsubstituted N-terminal amino acids from various peptides. In Saccharophagus degradans (strain 2-40 / ATCC 43961 / DSM 17024), this protein is Probable cytosol aminopeptidase.